The primary structure comprises 629 residues: Protein fem-1 homolog B (629 aa).

ANK repeat units lie at residues 47 to 77, 89 to 118, 122 to 151, 155 to 184, 188 to 217, and 220 to 250; these read QRST…DVQQ, DGAT…NVNH, TNST…NISI, YDNT…DPNA, CGAT…AMVV, and HGMT…DAKS. The TPR repeat unit spans residues 346–379; that stretch reads SHPIIYRGAVYADNMQFEQCIKLWLHALQLRQKG. ANK repeat units follow at residues 485-529 and 533-570; these read EGGS…NVNA and MGNS…HTDM.

The protein belongs to the fem-1 family. In terms of assembly, component of a CRL2 E3 ubiquitin-protein ligase complex, also named ECS (Elongin BC-CUL2/5-SOCS-box protein) complex.

It is found in the cytoplasm. The protein localises to the nucleus. It participates in protein modification; protein ubiquitination. Its function is as follows. Substrate-recognition component of a Cul2-RING (CRL2) E3 ubiquitin-protein ligase complex of the DesCEND (destruction via C-end degrons) pathway, which recognizes a C-degron located at the extreme C terminus of target proteins, leading to their ubiquitination and degradation. The C-degron recognized by the DesCEND pathway is usually a motif of less than ten residues and can be present in full-length proteins, truncated proteins or proteolytically cleaved forms. The CRL2(FEM1B) complex specifically recognizes proteins ending with -Gly-Leu-Asp-Arg, leading to their ubiquitination and degradation. The chain is Protein fem-1 homolog B from Xenopus laevis (African clawed frog).